The sequence spans 689 residues: Methionine--tRNA ligase (689 aa).

The 'HIGH' region motif lies at 15–25 (PYANGPIHLGH). Zn(2+) is bound by residues C146, C149, C159, and C162. A 'KMSKS' region motif is present at residues 332 to 336 (KMSKS). ATP is bound at residue K335. A disordered region spans residues 546–577 (KDNLQPTEAPKADKKADKKVEKKATTGDPLTD). Residues 555–570 (PKADKKADKKVEKKAT) are compositionally biased toward basic and acidic residues. Positions 588-689 (DFAKLDLRIA…QGAKPGMRVK (102 aa)) constitute a tRNA-binding domain.

Belongs to the class-I aminoacyl-tRNA synthetase family. MetG type 1 subfamily. Homodimer. Requires Zn(2+) as cofactor.

The protein resides in the cytoplasm. The catalysed reaction is tRNA(Met) + L-methionine + ATP = L-methionyl-tRNA(Met) + AMP + diphosphate. Is required not only for elongation of protein synthesis but also for the initiation of all mRNA translation through initiator tRNA(fMet) aminoacylation. The chain is Methionine--tRNA ligase from Shewanella denitrificans (strain OS217 / ATCC BAA-1090 / DSM 15013).